Reading from the N-terminus, the 398-residue chain is Dual specificity mitogen-activated protein kinase kinase 2 (398 aa).

Positions 1 to 29 (MPAKRKPVLPALTITPSPAEGPGPGGSAE) are disordered. One can recognise a Protein kinase domain in the interval 70-367 (FERISELGAG…LKMLMNHTFI (298 aa)). Residues 76–84 (LGAGNGGVV) and lysine 99 each bind ATP. Aspartate 192 functions as the Proton acceptor in the catalytic mechanism. A phosphoserine; by RAF mark is found at serine 220 and serine 224.

It belongs to the protein kinase superfamily. STE Ser/Thr protein kinase family. MAP kinase kinase subfamily. In terms of processing, activated by phosphorylation on Ser/Thr catalyzed by MAP kinase kinase kinases (RAF).

The catalysed reaction is L-seryl-[protein] + ATP = O-phospho-L-seryl-[protein] + ADP + H(+). It carries out the reaction L-threonyl-[protein] + ATP = O-phospho-L-threonyl-[protein] + ADP + H(+). It catalyses the reaction L-tyrosyl-[protein] + ATP = O-phospho-L-tyrosyl-[protein] + ADP + H(+). Functionally, catalyzes the concomitant phosphorylation of a threonine and a tyrosine residue in a Thr-Glu-Tyr sequence located in MAP kinases. Activates the ERK1 and ERK2 MAP kinases. The polypeptide is Dual specificity mitogen-activated protein kinase kinase 2 (MAP2K2) (Gallus gallus (Chicken)).